We begin with the raw amino-acid sequence, 244 residues long: 5-oxoprolinase subunit A (244 aa).

This sequence belongs to the LamB/PxpA family. Forms a complex composed of PxpA, PxpB and PxpC.

It catalyses the reaction 5-oxo-L-proline + ATP + 2 H2O = L-glutamate + ADP + phosphate + H(+). Functionally, catalyzes the cleavage of 5-oxoproline to form L-glutamate coupled to the hydrolysis of ATP to ADP and inorganic phosphate. This is 5-oxoprolinase subunit A from Escherichia coli (strain K12).